The following is a 921-amino-acid chain: TRPM8 channel-associated factor 1 (921 aa).

Residues 542–841 form the Peptidase M60 domain; sequence YCWMSTGLYI…TYLQLQEAFG (300 aa).

The protein belongs to the TCAF family. Interacts with TRPM8 (via N-terminus and C-terminus domains); the interaction inhibits TRPM8 channel activity. Interacts with TRPV6. As to expression, isoform 2 is expressed in the prostate and strongly expressed in cancerous prostate samples.

It is found in the cell membrane. Its function is as follows. Positively regulates the plasma membrane cation channel TRPM8 activity. Involved in the recruitment of TRPM8 to the cell surface. Promotes prostate cancer cell migration inhibition in a TRPM8-dependent manner. The sequence is that of TRPM8 channel-associated factor 1 from Homo sapiens (Human).